The following is a 168-amino-acid chain: G/U mismatch-specific DNA glycosylase (168 aa).

It belongs to the uracil-DNA glycosylase (UDG) superfamily. TDG/mug family. Binds DNA as a monomer.

It is found in the cytoplasm. It catalyses the reaction Specifically hydrolyzes mismatched double-stranded DNA and polynucleotides, releasing free uracil.. In terms of biological role, excises ethenocytosine and uracil, which can arise by alkylation or deamination of cytosine, respectively, from the corresponding mispairs with guanine in ds-DNA. It is capable of hydrolyzing the carbon-nitrogen bond between the sugar-phosphate backbone of the DNA and the mispaired base. The complementary strand guanine functions in substrate recognition. Required for DNA damage lesion repair in stationary-phase cells. The protein is G/U mismatch-specific DNA glycosylase of Escherichia coli (strain UTI89 / UPEC).